The primary structure comprises 283 residues: Phosphatidylglycerol--prolipoprotein diacylglyceryl transferase (283 aa).

The next 4 helical transmembrane spans lie at 20 to 40, 51 to 71, 97 to 117, and 123 to 143; these read LGPV…FVAM, GGNP…GIIG, ITNG…AVYF, and GVAF…AQAI. Position 145 (Arg-145) interacts with a 1,2-diacyl-sn-glycero-3-phospho-(1'-sn-glycerol). The next 2 membrane-spanning stretches (helical) occupy residues 192–212 and 255–275; these read VHPT…VLLW and INVI…FALR.

It belongs to the Lgt family.

The protein localises to the cell membrane. It carries out the reaction L-cysteinyl-[prolipoprotein] + a 1,2-diacyl-sn-glycero-3-phospho-(1'-sn-glycerol) = an S-1,2-diacyl-sn-glyceryl-L-cysteinyl-[prolipoprotein] + sn-glycerol 1-phosphate + H(+). It functions in the pathway protein modification; lipoprotein biosynthesis (diacylglyceryl transfer). Its function is as follows. Catalyzes the transfer of the diacylglyceryl group from phosphatidylglycerol to the sulfhydryl group of the N-terminal cysteine of a prolipoprotein, the first step in the formation of mature lipoproteins. This chain is Phosphatidylglycerol--prolipoprotein diacylglyceryl transferase, found in Corynebacterium diphtheriae (strain ATCC 700971 / NCTC 13129 / Biotype gravis).